Here is a 185-residue protein sequence, read N- to C-terminus: Ribosome-recycling factor (185 aa).

This sequence belongs to the RRF family.

The protein resides in the cytoplasm. Responsible for the release of ribosomes from messenger RNA at the termination of protein biosynthesis. May increase the efficiency of translation by recycling ribosomes from one round of translation to another. The sequence is that of Ribosome-recycling factor from Streptococcus pneumoniae (strain 70585).